Consider the following 1700-residue polypeptide: uncharacterized protein (1700 aa).

A helical transmembrane segment spans residues Ala-986 to Val-1006. Coiled-coil stretches lie at residues Asp-1246–Lys-1278 and Gln-1657–Asp-1684. A disordered region spans residues Asp-1650–Glu-1700. Over residues Thr-1651 to Glu-1700 the composition is skewed to acidic residues.

The protein localises to the host membrane. It is found in the virion. This is an uncharacterized protein from Acanthamoeba polyphaga (Amoeba).